The chain runs to 512 residues: Oxalate--CoA ligase (512 aa).

168–179 (HTSGTTGRPKVV) contacts ATP. Phosphoserine occurs at positions 283 and 284. Residues 381 to 429 (DRFFRTGDEGKLDKDGYVFITGRIKELVNRGGEKISPAEIDAVLMQHPD) carry the FACS motif. The Microbody targeting signal motif lies at 510–512 (AKL).

Belongs to the ATP-dependent AMP-binding enzyme family.

It localises to the peroxisome matrix. It is found in the peroxisome membrane. It carries out the reaction oxalate + ATP + CoA = oxalyl-CoA + AMP + diphosphate. In terms of biological role, catalyzes the first step in a degradation pathway of oxalate to CO(2) to protect the cell against the harmful effects of oxalate derived from endogenous processes or an environmental sources. The chain is Oxalate--CoA ligase (pcs60) from Schizosaccharomyces pombe (strain 972 / ATCC 24843) (Fission yeast).